Here is an 84-residue protein sequence, read N- to C-terminus: RQC P-site tRNA stabilizing factor (84 aa).

The S4 RNA-binding domain occupies 1 to 64; sequence MRIDKFLQSV…IEEYTILQIP (64 aa).

The protein belongs to the RqcP family. Associates with stalled 50S ribosomal subunits. Binds to RqcH, 23S rRNA and the P-site tRNA. Does not require RqcH for association with 50S subunits.

Its function is as follows. Key component of the ribosome quality control system (RQC), a ribosome-associated complex that mediates the extraction of incompletely synthesized nascent chains from stalled ribosomes and their subsequent degradation. RqcH recruits Ala-charged tRNA, and with RqcP directs the elongation of stalled nascent chains on 50S ribosomal subunits, leading to non-templated C-terminal alanine extensions (Ala tail). The Ala tail promotes nascent chain degradation. RqcP is associated with the translocation-like movement of the peptidyl-tRNA from the A-site into the P-site. The sequence is that of RQC P-site tRNA stabilizing factor from Helicobacter pylori (strain J99 / ATCC 700824) (Campylobacter pylori J99).